A 222-amino-acid chain; its full sequence is DNA mismatch repair protein MutH (222 aa).

This sequence belongs to the MutH family.

The protein resides in the cytoplasm. In terms of biological role, sequence-specific endonuclease that cleaves unmethylated GATC sequences. It is involved in DNA mismatch repair. This chain is DNA mismatch repair protein MutH, found in Pasteurella multocida (strain Pm70).